An 80-amino-acid polypeptide reads, in one-letter code: Large ribosomal subunit protein uL24 (80 aa).

Residues 53–80 (HMKPTQSHPQGSIIEREFPIHASNVKKS) are disordered.

It belongs to the universal ribosomal protein uL24 family. In terms of assembly, part of the 50S ribosomal subunit.

One of two assembly initiator proteins, it binds directly to the 5'-end of the 23S rRNA, where it nucleates assembly of the 50S subunit. Functionally, one of the proteins that surrounds the polypeptide exit tunnel on the outside of the subunit. The chain is Large ribosomal subunit protein uL24 from Chlorobium limicola (strain DSM 245 / NBRC 103803 / 6330).